The primary structure comprises 436 residues: 3-phosphoshikimate 1-carboxyvinyltransferase (436 aa).

3-phosphoshikimate contacts are provided by Lys23, Ser24, and Arg28. Lys23 is a binding site for phosphoenolpyruvate. Residues Gly97 and Arg126 each coordinate phosphoenolpyruvate. 4 residues coordinate 3-phosphoshikimate: Ser171, Gln173, Asp323, and Lys350. Gln173 contributes to the phosphoenolpyruvate binding site. Residue Asp323 is the Proton acceptor of the active site. Phosphoenolpyruvate-binding residues include Arg354 and Arg396.

The protein belongs to the EPSP synthase family. As to quaternary structure, monomer.

The protein resides in the cytoplasm. The enzyme catalyses 3-phosphoshikimate + phosphoenolpyruvate = 5-O-(1-carboxyvinyl)-3-phosphoshikimate + phosphate. It functions in the pathway metabolic intermediate biosynthesis; chorismate biosynthesis; chorismate from D-erythrose 4-phosphate and phosphoenolpyruvate: step 6/7. In terms of biological role, catalyzes the transfer of the enolpyruvyl moiety of phosphoenolpyruvate (PEP) to the 5-hydroxyl of shikimate-3-phosphate (S3P) to produce enolpyruvyl shikimate-3-phosphate and inorganic phosphate. This chain is 3-phosphoshikimate 1-carboxyvinyltransferase, found in Prochlorococcus marinus (strain AS9601).